The chain runs to 167 residues: Phosphopantetheine adenylyltransferase (167 aa).

Residue threonine 9 participates in substrate binding. ATP contacts are provided by residues 9–10 and histidine 17; that span reads TF. Substrate contacts are provided by lysine 41, leucine 73, and arginine 87. ATP is bound by residues 88–90, glutamate 98, and 123–129; these read GLR and NSYISST.

It belongs to the bacterial CoaD family. Homohexamer. Mg(2+) is required as a cofactor.

It is found in the cytoplasm. The catalysed reaction is (R)-4'-phosphopantetheine + ATP + H(+) = 3'-dephospho-CoA + diphosphate. It functions in the pathway cofactor biosynthesis; coenzyme A biosynthesis; CoA from (R)-pantothenate: step 4/5. Reversibly transfers an adenylyl group from ATP to 4'-phosphopantetheine, yielding dephospho-CoA (dPCoA) and pyrophosphate. The sequence is that of Phosphopantetheine adenylyltransferase from Chromohalobacter salexigens (strain ATCC BAA-138 / DSM 3043 / CIP 106854 / NCIMB 13768 / 1H11).